Reading from the N-terminus, the 368-residue chain is Probable multidrug ABC transporter permease YbhR (368 aa).

Residues 1–24 (MFHRLWTLIRKELQSLLREPQTRA) are Cytoplasmic-facing. Residues 25–45 (ILILPVLIQVILFPFAATLEV) form a helical membrane-spanning segment. The Periplasmic segment spans residues 46 to 173 (TNATIAIYDE…WYNPNLDYKW (128 aa)). The ABC transmembrane type-2 domain occupies 129-366 (AQIAANYLQQ…SAAYAMFRRK (238 aa)). The helical transmembrane segment at 174–194 (FVVPSLIAMITTIGVMIVTSL) threads the bilayer. Topologically, residues 195–222 (SVAREREQGTLDQLLVSPLTTWQIFIGK) are cytoplasmic. Residues 223–243 (AVPALIVATFQATIVLAIGIW) form a helical membrane-spanning segment. At 244–253 (AYQIPFAGSL) the chain is on the periplasmic side. The chain crosses the membrane as a helical span at residues 254 to 274 (ALFYFTMVIYGLSLVGFGLLI). Topologically, residues 275–284 (SSLCSTQQQA) are cytoplasmic. The helical transmembrane segment at 285-305 (FIGVFVFMMPAILLSGYVSPV) threads the bilayer. Residues 306 to 339 (ENMPVWLQNLTWINPIRHFTDITKQIYLKDASLD) are Periplasmic-facing. Residues 340–360 (IVWNSLWPLLVITATTGSAAY) form a helical membrane-spanning segment. Topologically, residues 361 to 368 (AMFRRKVM) are cytoplasmic.

Belongs to the ABC-2 integral membrane protein family. The complex is probably composed of two ATP-binding proteins (YbhF) and two transmembrane proteins (YbhR and YbhS).

The protein resides in the cell inner membrane. Part of the ABC transporter complex YbhFSR that could be involved in efflux of cefoperazone. Probably involved in the translocation of the substrate across the membrane. The protein is Probable multidrug ABC transporter permease YbhR (ybhR) of Escherichia coli O157:H7.